The chain runs to 157 residues: Cyclic pyranopterin monophosphate synthase (157 aa).

Residues 75-77 and 111-112 each bind substrate; these read LCH and ME. Residue Asp126 is part of the active site.

This sequence belongs to the MoaC family. As to quaternary structure, homohexamer; trimer of dimers.

The catalysed reaction is (8S)-3',8-cyclo-7,8-dihydroguanosine 5'-triphosphate = cyclic pyranopterin phosphate + diphosphate. It functions in the pathway cofactor biosynthesis; molybdopterin biosynthesis. Functionally, catalyzes the conversion of (8S)-3',8-cyclo-7,8-dihydroguanosine 5'-triphosphate to cyclic pyranopterin monophosphate (cPMP). The protein is Cyclic pyranopterin monophosphate synthase of Novosphingobium aromaticivorans (strain ATCC 700278 / DSM 12444 / CCUG 56034 / CIP 105152 / NBRC 16084 / F199).